Reading from the N-terminus, the 389-residue chain is NADH-dependent butanol dehydrogenase A (389 aa).

The protein belongs to the iron-containing alcohol dehydrogenase family. In terms of assembly, homodimer.

It participates in alcohol metabolism; butanol biosynthesis. The sequence is that of NADH-dependent butanol dehydrogenase A (bdhA) from Clostridium acetobutylicum (strain ATCC 824 / DSM 792 / JCM 1419 / IAM 19013 / LMG 5710 / NBRC 13948 / NRRL B-527 / VKM B-1787 / 2291 / W).